The chain runs to 203 residues: ATP-dependent Clp protease proteolytic subunit 1 (203 aa).

Ser-102 acts as the Nucleophile in catalysis. The active site involves His-127.

Belongs to the peptidase S14 family. Fourteen ClpP subunits assemble into 2 heptameric rings which stack back to back to give a disk-like structure with a central cavity, resembling the structure of eukaryotic proteasomes.

It localises to the cytoplasm. It carries out the reaction Hydrolysis of proteins to small peptides in the presence of ATP and magnesium. alpha-casein is the usual test substrate. In the absence of ATP, only oligopeptides shorter than five residues are hydrolyzed (such as succinyl-Leu-Tyr-|-NHMec, and Leu-Tyr-Leu-|-Tyr-Trp, in which cleavage of the -Tyr-|-Leu- and -Tyr-|-Trp bonds also occurs).. Cleaves peptides in various proteins in a process that requires ATP hydrolysis. Has a chymotrypsin-like activity. Plays a major role in the degradation of misfolded proteins. In Rhizobium johnstonii (strain DSM 114642 / LMG 32736 / 3841) (Rhizobium leguminosarum bv. viciae), this protein is ATP-dependent Clp protease proteolytic subunit 1.